The sequence spans 176 residues: NAD(P)H-quinone oxidoreductase subunit 6, chloroplastic (176 aa).

5 consecutive transmembrane segments (helical) span residues 10-30 (FILVFLGLVLILGGLAVVLLP), 32-52 (PIYSAFSLGLVLVCISLLYIL), 61-81 (AQLLIYVGAINVLIIFAVMFL), 95-115 (VGDGVTSVVCTSLFASLITTI), and 152-172 (FLIPFELISIILLVALIGAIA).

It belongs to the complex I subunit 6 family. NDH is composed of at least 16 different subunits, 5 of which are encoded in the nucleus.

It is found in the plastid. It localises to the chloroplast thylakoid membrane. It catalyses the reaction a plastoquinone + NADH + (n+1) H(+)(in) = a plastoquinol + NAD(+) + n H(+)(out). The catalysed reaction is a plastoquinone + NADPH + (n+1) H(+)(in) = a plastoquinol + NADP(+) + n H(+)(out). In terms of biological role, NDH shuttles electrons from NAD(P)H:plastoquinone, via FMN and iron-sulfur (Fe-S) centers, to quinones in the photosynthetic chain and possibly in a chloroplast respiratory chain. The immediate electron acceptor for the enzyme in this species is believed to be plastoquinone. Couples the redox reaction to proton translocation, and thus conserves the redox energy in a proton gradient. In Trachelium caeruleum (Blue throatwort), this protein is NAD(P)H-quinone oxidoreductase subunit 6, chloroplastic (ndhG).